The sequence spans 97 residues: YcgL domain-containing protein Tcr_0238 (97 aa).

A YcgL domain is found at 3 to 87; that stretch reads LLVSAYKSAK…SEIEKMGDMP (85 aa). The disordered stretch occupies residues 78–97; sequence SEIEKMGDMPPPPEHLDNIF.

The sequence is that of YcgL domain-containing protein Tcr_0238 from Hydrogenovibrio crunogenus (strain DSM 25203 / XCL-2) (Thiomicrospira crunogena).